The sequence spans 339 residues: Alpha-ketoglutarate-dependent dioxygenase btcD (339 aa).

H96 is a substrate binding site. Fe cation is bound by residues H140 and D142. 2-oxoglutarate is bound at residue T173. Residues 207 to 230 (DGSDPKFQVPRGSPANVGTNLRPT) are disordered. H302 contributes to the Fe cation binding site. 2-oxoglutarate-binding residues include R314 and R318. R318 is a binding site for substrate.

It belongs to the TfdA dioxygenase family. Fe(2+) is required as a cofactor.

It functions in the pathway secondary metabolite biosynthesis; terpenoid biosynthesis. Functionally, alpha-ketoglutarate-dependent dioxygenase; part of the gene cluster that mediates the biosynthesis of betaestacins. The bifunctional terpene synthase btcA converts isopentenyl diphosphate (IPP) and dimethylallyl diphosphate (DMAPP) into the sesterterpene betaestacin I. The C-terminal prenyltransferase (PT) domain of btcA catalyzes formation of GFPP, whereas the N-terminal terpene cyclase (TC) domain catalyzes the cyclization of GFPP into betaestacin I. The cytochrome P450 monooxygenase btcB is then responsible for the six-step oxidation of betaestacin I to yield betaestacin II. The roles of the cytochrome P450 monooxygenase btcC and the alpha-ketoglutarate-dependent dioxygenase btcD have not been identified yet. This Neocamarosporium betae (Beet black rot fungus) protein is Alpha-ketoglutarate-dependent dioxygenase btcD.